The following is a 382-amino-acid chain: Kelch domain-containing protein 3 (382 aa).

Kelch repeat units lie at residues 25–77 (RVYS…PYMR), 88–138 (TVFL…VLGK), 139–189 (TMYI…TMLG), 191–249 (HMYV…GYNG), and 251–301 (LYIF…IVGD).

In terms of assembly, component of a CRL2(KLHDC3) complex, also named ECS(KLHDC3) complex, composed of CUL2, Elongin BC (ELOB and ELOC), RBX1 and substrate-specific adapter KLHDC3. May form oligomers as a KLHDC3-ELOB-ELOC complex; this interaction is likely autoinhibitory for the E3 ligase complex.

Its subcellular location is the cytoplasm. Its pathway is protein modification; protein ubiquitination. Substrate-recognition component of a Cul2-RING (CRL2) E3 ubiquitin-protein ligase complex of the DesCEND (destruction via C-end degrons) pathway, which recognizes a C-degron located at the extreme C terminus of target proteins, leading to their ubiquitination and degradation. The C-degron recognized by the DesCEND pathway is usually a motif of less than ten residues and can be present in full-length proteins, truncated proteins or proteolytically cleaved forms. The CRL2(KLHDC3) complex specifically recognizes proteins with a glycine (Gly) at the C-terminus, leading to their ubiquitination and degradation: recognizes the C-terminal -Arg-(Xaa)n-Arg-Gly, -Arg-(Xaa)n-Lys-Gly, and -Arg-(Xaa)n-Gln-Gly degrons. The CRL2(KLHDC3) complex mediates ubiquitination and degradation of truncated SELENOV and SEPHS2 selenoproteins produced by failed UGA/Sec decoding, which end with a glycine. May be involved in meiotic recombination process. The sequence is that of Kelch domain-containing protein 3 from Bos taurus (Bovine).